The following is a 302-amino-acid chain: MAVAHEMEMESVNLNMEREGKEEPEEEKMKGNGEGKDFPRSRKVHRIVSKWMLPEPVRRTYLERANCLPPPLFIILISLAELAVFIYYAVWKPQKQWITLDTGILESPLTYCPEKREEAWRFISYMLVHAGVQHIVGNLLMQIVLGIPLEMVHKGLRVGLVYLAGVLAGSLASSIFDPLKSLVGASGGVYALMGGYFMNVIVNFREMIPAFGIVRLLVIILIVASDMGFALYRRFFVPANGSPVSFAAHIAGGFAGMSIGYTVFSCFDKTLLKDPRFWIAIAAYVACLLFAVFFNIFLSPAN.

Residues M1–F38 are disordered. Residues M16–F38 are compositionally biased toward basic and acidic residues. 7 helical membrane passes run P71–W91, L127–I147, V158–P178, L182–V202, F211–L231, V244–F264, and F277–F297. S186 serves as the catalytic Nucleophile. Residue H249 is part of the active site.

Belongs to the peptidase S54 family. Proteolytic processing of the proenzyme produces an N- and a C-terminal fragment. The processing is required for activation of the protease.

The protein resides in the cell membrane. It catalyses the reaction Cleaves type-1 transmembrane domains using a catalytic dyad composed of serine and histidine that are contributed by different transmembrane domains.. Its function is as follows. Involved in regulated intramembrane proteolysis and the subsequent release of functional polypeptides from their membrane anchors. Known substrate: EFNB3. The sequence is that of Rhomboid-related protein 2 (Rhbdl2) from Mus musculus (Mouse).